A 264-amino-acid polypeptide reads, in one-letter code: 3-methyl-2-oxobutanoate hydroxymethyltransferase (264 aa).

Aspartate 45 and aspartate 84 together coordinate Mg(2+). 3-methyl-2-oxobutanoate-binding positions include 45 to 46 (DS), aspartate 84, and lysine 112. Residue glutamate 114 coordinates Mg(2+). The active-site Proton acceptor is glutamate 181.

The protein belongs to the PanB family. In terms of assembly, homodecamer; pentamer of dimers. It depends on Mg(2+) as a cofactor.

Its subcellular location is the cytoplasm. It catalyses the reaction 3-methyl-2-oxobutanoate + (6R)-5,10-methylene-5,6,7,8-tetrahydrofolate + H2O = 2-dehydropantoate + (6S)-5,6,7,8-tetrahydrofolate. It functions in the pathway cofactor biosynthesis; (R)-pantothenate biosynthesis; (R)-pantoate from 3-methyl-2-oxobutanoate: step 1/2. Functionally, catalyzes the reversible reaction in which hydroxymethyl group from 5,10-methylenetetrahydrofolate is transferred onto alpha-ketoisovalerate to form ketopantoate. The sequence is that of 3-methyl-2-oxobutanoate hydroxymethyltransferase from Shigella sonnei (strain Ss046).